The sequence spans 491 residues: Trypanothione reductase (491 aa).

Residue 35–51 participates in FAD binding; that stretch reads DLQKHHGPPHYAALGGT. C52 and C57 are disulfide-bonded. H461 (proton acceptor) is an active-site residue.

This sequence belongs to the class-I pyridine nucleotide-disulfide oxidoreductase family. Homodimer. The cofactor is FAD. The N-terminus is blocked.

The protein localises to the cytoplasm. It catalyses the reaction trypanothione + NADP(+) = trypanothione disulfide + NADPH + H(+). Its function is as follows. Trypanothione is the parasite analog of glutathione; this enzyme is the equivalent of glutathione reductase. In Crithidia fasciculata, this protein is Trypanothione reductase (TPR).